The primary structure comprises 961 residues: DNA replication licensing factor MCM2 (961 aa).

Residues 1–17 (MDDSENNAPSTPGSPGF) are compositionally biased toward polar residues. 2 disordered regions span residues 1–81 (MDDS…FNDN) and 120–220 (AEAE…EEDE). Positions 39-78 (SDDDDDDVVGAEEAEVDPNVLPEDDGVVAAEEEEDGEDLF) are enriched in acidic residues. 2 stretches are compositionally biased toward basic and acidic residues: residues 120–146 (AEAE…LHDQ) and 166–176 (PPREPRTPRSD). Over residues 205-220 (QTDDDPYEDEFDEEDE) the composition is skewed to acidic residues. A C4-type zinc finger spans residues 380 to 406 (CSKCGTVLGPFFQNSYTEVKVGSCPEC). The region spanning 524-730 (IGERIVKSIA…FTDEMLARFV (207 aa)) is the MCM domain. Residue 574-581 (GDPGTAKS) coordinates ATP. Positions 706–709 (SRFD) match the Arginine finger motif.

It belongs to the MCM family. In terms of assembly, component of the minichromosome maintenance (MCM) complex, a heterotetramer composed of MCM2, MCM3, MCM4, MCM5, MCM6 and MCM7.

The protein resides in the nucleus. It catalyses the reaction ATP + H2O = ADP + phosphate + H(+). Probable component of the MCM2-7 complex (MCM complex) that may function as a DNA helicase and which is essential to undergo a single round of replication initiation and elongation per cell cycle in eukaryotic cells. The polypeptide is DNA replication licensing factor MCM2 (Oryza sativa subsp. indica (Rice)).